We begin with the raw amino-acid sequence, 265 residues long: Imidazole glycerol phosphate synthase subunit HisF (265 aa).

Catalysis depends on residues Asp11 and Asp130.

The protein belongs to the HisA/HisF family. Heterodimer of HisH and HisF.

The protein localises to the cytoplasm. It catalyses the reaction 5-[(5-phospho-1-deoxy-D-ribulos-1-ylimino)methylamino]-1-(5-phospho-beta-D-ribosyl)imidazole-4-carboxamide + L-glutamine = D-erythro-1-(imidazol-4-yl)glycerol 3-phosphate + 5-amino-1-(5-phospho-beta-D-ribosyl)imidazole-4-carboxamide + L-glutamate + H(+). Its pathway is amino-acid biosynthesis; L-histidine biosynthesis; L-histidine from 5-phospho-alpha-D-ribose 1-diphosphate: step 5/9. IGPS catalyzes the conversion of PRFAR and glutamine to IGP, AICAR and glutamate. The HisF subunit catalyzes the cyclization activity that produces IGP and AICAR from PRFAR using the ammonia provided by the HisH subunit. The sequence is that of Imidazole glycerol phosphate synthase subunit HisF from Idiomarina loihiensis (strain ATCC BAA-735 / DSM 15497 / L2-TR).